The primary structure comprises 221 residues: Small ribosomal subunit protein uS3 (221 aa).

The KH type-2 domain maps to 39-108; sequence IRKFVKKELF…NVLINIVEVK (70 aa).

The protein belongs to the universal ribosomal protein uS3 family. As to quaternary structure, part of the 30S ribosomal subunit. Forms a tight complex with proteins S10 and S14.

In terms of biological role, binds the lower part of the 30S subunit head. Binds mRNA in the 70S ribosome, positioning it for translation. This is Small ribosomal subunit protein uS3 from Clostridium beijerinckii (strain ATCC 51743 / NCIMB 8052) (Clostridium acetobutylicum).